Reading from the N-terminus, the 266-residue chain is Nickel import ATP-binding protein NikE (266 aa).

One can recognise an ABC transporter domain in the interval 4–252 (ISADNIVKIY…RHPASRLLRE (249 aa)). 45 to 52 (GRSGCGKS) provides a ligand contact to ATP.

The protein belongs to the ABC transporter superfamily. Nickel importer (TC 3.A.1.5.3) family. As to quaternary structure, the complex is composed of two ATP-binding proteins (NikD and NikE), two transmembrane proteins (NikB and NikC) and a solute-binding protein (NikA).

The protein localises to the cell inner membrane. The enzyme catalyses Ni(2+)(out) + ATP + H2O = Ni(2+)(in) + ADP + phosphate + H(+). Its function is as follows. Part of the ABC transporter complex NikABCDE involved in nickel import. Responsible for energy coupling to the transport system. This is Nickel import ATP-binding protein NikE from Brucella abortus (strain 2308).